The following is a 538-amino-acid chain: Putative outer membrane porin BglH (538 aa).

The signal sequence occupies residues 1–25 (MFRRNLITSAILLMAPLAFSAQSLA). Positions 52–82 (KDEEKKKYTPATVNRSVSTNDQGYAANPFPT) are disordered. A compositionally biased stretch (polar residues) spans 62–73 (ATVNRSVSTNDQ).

Belongs to the porin LamB (TC 1.B.3) family.

The protein localises to the cell outer membrane. In terms of biological role, may be a sugar porin with a broad carbohydrate specificity. The chain is Putative outer membrane porin BglH (bglH) from Shigella sonnei (strain Ss046).